The sequence spans 413 residues: MKIYLVGGAVRDALLGLPVKDKDWVVVGATPQEMLDAGYQQVGRDFPVFLHPQTHEEYALARTERKSGSGYTGFTCYAAPDVTLEADLQRRDLTINALARDDAGQIIDPYHGRRDLEARLLRHVSPAFGEDPLRVLRVARFAARYAHLSFRIADETLALMREMTAAGELEHLTPERVWKETENALTTRNPQVYFQVLRDCGALRVLFPEIDALFGVPAPAKWHPEIDTGVHTLMTLSMAAMLSPQLDVRFATLCHDLGKGLTPKNLWPRHHGHGPAGVKLVEQLCQRLRVPNDLRDLAKLVAEYHDLIHTFPILQPKTIVKLFDAIDAWRKPQRVEQIALTSEADVRGRTGFEASDYPQGRWLREAWQVAQAVPTKEVVEAGFKGIEIREELTKRRIAAVANWKEKRCPNPAS.

Residues glycine 8 and arginine 11 each contribute to the ATP site. Positions 8 and 11 each coordinate CTP. Aspartate 21 and aspartate 23 together coordinate Mg(2+). Residues arginine 91, arginine 137, and arginine 140 each coordinate ATP. CTP-binding residues include arginine 91, arginine 137, and arginine 140. The 102-residue stretch at 228–329 folds into the HD domain; sequence TGVHTLMTLS…VKLFDAIDAW (102 aa).

Belongs to the tRNA nucleotidyltransferase/poly(A) polymerase family. Bacterial CCA-adding enzyme type 1 subfamily. As to quaternary structure, monomer. Can also form homodimers and oligomers. It depends on Mg(2+) as a cofactor. Ni(2+) serves as cofactor.

It carries out the reaction a tRNA precursor + 2 CTP + ATP = a tRNA with a 3' CCA end + 3 diphosphate. The enzyme catalyses a tRNA with a 3' CCA end + 2 CTP + ATP = a tRNA with a 3' CCACCA end + 3 diphosphate. Its function is as follows. Catalyzes the addition and repair of the essential 3'-terminal CCA sequence in tRNAs without using a nucleic acid template. Adds these three nucleotides in the order of C, C, and A to the tRNA nucleotide-73, using CTP and ATP as substrates and producing inorganic pyrophosphate. tRNA 3'-terminal CCA addition is required both for tRNA processing and repair. Also involved in tRNA surveillance by mediating tandem CCA addition to generate a CCACCA at the 3' terminus of unstable tRNAs. While stable tRNAs receive only 3'-terminal CCA, unstable tRNAs are marked with CCACCA and rapidly degraded. This chain is Multifunctional CCA protein, found in Salmonella typhimurium (strain LT2 / SGSC1412 / ATCC 700720).